The primary structure comprises 123 residues: Small ribosomal subunit protein uS12 (123 aa).

Residues 1 to 21 (MPTIEQLVRKGRQAKPKKSKT) form a disordered region. A compositionally biased stretch (basic residues) spans 9–20 (RKGRQAKPKKSK). A 3-methylthioaspartic acid modification is found at aspartate 89.

The protein belongs to the universal ribosomal protein uS12 family. Part of the 30S ribosomal subunit. Contacts proteins S8 and S17. May interact with IF1 in the 30S initiation complex.

In terms of biological role, with S4 and S5 plays an important role in translational accuracy. Functionally, interacts with and stabilizes bases of the 16S rRNA that are involved in tRNA selection in the A site and with the mRNA backbone. Located at the interface of the 30S and 50S subunits, it traverses the body of the 30S subunit contacting proteins on the other side and probably holding the rRNA structure together. The combined cluster of proteins S8, S12 and S17 appears to hold together the shoulder and platform of the 30S subunit. The chain is Small ribosomal subunit protein uS12 from Bifidobacterium adolescentis (strain ATCC 15703 / DSM 20083 / NCTC 11814 / E194a).